The following is a 405-amino-acid chain: Tryptophan synthase beta chain (405 aa).

An N6-(pyridoxal phosphate)lysine modification is found at Lys98.

It belongs to the TrpB family. Tetramer of two alpha and two beta chains. Requires pyridoxal 5'-phosphate as cofactor.

The enzyme catalyses (1S,2R)-1-C-(indol-3-yl)glycerol 3-phosphate + L-serine = D-glyceraldehyde 3-phosphate + L-tryptophan + H2O. It functions in the pathway amino-acid biosynthesis; L-tryptophan biosynthesis; L-tryptophan from chorismate: step 5/5. Its function is as follows. The beta subunit is responsible for the synthesis of L-tryptophan from indole and L-serine. The chain is Tryptophan synthase beta chain from Xanthomonas campestris pv. campestris (strain 8004).